The primary structure comprises 258 residues: Imidazole glycerol phosphate synthase subunit HisF (258 aa).

Catalysis depends on residues Asp12 and Asp131.

The protein belongs to the HisA/HisF family. As to quaternary structure, heterodimer of HisH and HisF.

It localises to the cytoplasm. It carries out the reaction 5-[(5-phospho-1-deoxy-D-ribulos-1-ylimino)methylamino]-1-(5-phospho-beta-D-ribosyl)imidazole-4-carboxamide + L-glutamine = D-erythro-1-(imidazol-4-yl)glycerol 3-phosphate + 5-amino-1-(5-phospho-beta-D-ribosyl)imidazole-4-carboxamide + L-glutamate + H(+). Its pathway is amino-acid biosynthesis; L-histidine biosynthesis; L-histidine from 5-phospho-alpha-D-ribose 1-diphosphate: step 5/9. Its function is as follows. IGPS catalyzes the conversion of PRFAR and glutamine to IGP, AICAR and glutamate. The HisF subunit catalyzes the cyclization activity that produces IGP and AICAR from PRFAR using the ammonia provided by the HisH subunit. This is Imidazole glycerol phosphate synthase subunit HisF from Corynebacterium glutamicum (strain R).